We begin with the raw amino-acid sequence, 276 residues long: 3-methyl-2-oxobutanoate hydroxymethyltransferase (276 aa).

The Mg(2+) site is built by D44 and D83. 3-methyl-2-oxobutanoate-binding positions include 44-45, D83, and K113; that span reads DS. E115 serves as a coordination point for Mg(2+). E182 functions as the Proton acceptor in the catalytic mechanism.

It belongs to the PanB family. As to quaternary structure, homodecamer; pentamer of dimers. The cofactor is Mg(2+).

It localises to the cytoplasm. The catalysed reaction is 3-methyl-2-oxobutanoate + (6R)-5,10-methylene-5,6,7,8-tetrahydrofolate + H2O = 2-dehydropantoate + (6S)-5,6,7,8-tetrahydrofolate. It functions in the pathway cofactor biosynthesis; (R)-pantothenate biosynthesis; (R)-pantoate from 3-methyl-2-oxobutanoate: step 1/2. Catalyzes the reversible reaction in which hydroxymethyl group from 5,10-methylenetetrahydrofolate is transferred onto alpha-ketoisovalerate to form ketopantoate. The sequence is that of 3-methyl-2-oxobutanoate hydroxymethyltransferase from Clostridium acetobutylicum (strain ATCC 824 / DSM 792 / JCM 1419 / IAM 19013 / LMG 5710 / NBRC 13948 / NRRL B-527 / VKM B-1787 / 2291 / W).